The sequence spans 343 residues: tRNA N6-adenosine threonylcarbamoyltransferase (343 aa).

The Fe cation site is built by His-120 and His-124. Substrate is bound by residues 142–146, Asp-175, Gly-188, Asp-192, and Asn-281; that span reads VVSGG. Fe cation is bound at residue Asp-310.

It belongs to the KAE1 / TsaD family. The cofactor is Fe(2+).

It localises to the cytoplasm. It catalyses the reaction L-threonylcarbamoyladenylate + adenosine(37) in tRNA = N(6)-L-threonylcarbamoyladenosine(37) in tRNA + AMP + H(+). Required for the formation of a threonylcarbamoyl group on adenosine at position 37 (t(6)A37) in tRNAs that read codons beginning with adenine. Is involved in the transfer of the threonylcarbamoyl moiety of threonylcarbamoyl-AMP (TC-AMP) to the N6 group of A37, together with TsaE and TsaB. TsaD likely plays a direct catalytic role in this reaction. This is tRNA N6-adenosine threonylcarbamoyltransferase from Bacillus cereus (strain ATCC 10987 / NRS 248).